The primary structure comprises 106 residues: uncharacterized protein (106 aa).

This is an uncharacterized protein from Escherichia coli O157:H7.